The following is a 545-amino-acid chain: MLTQLKTYPKLLKHYEEIKEAHMRDWFSKDKERASRYFVQLESLSLDYSKNRLNDTTLKLLFELANDCSLKEKIEAMFKGEKINTTEKRAVLHTALRSLNDTEILLDNMEVLKSVRSVLKRMRAFSDSVRSGKRLGYTNQVITDIVNIGIGGSDLGALMVCTALKRYGHPRLKMHFVSNVDGTQILDVLEKINPASTLFIVASKTFSTQETLTNALTARKWFVERSGDEKHIAKHFVAVSTNKEAVQQFGIDEHNMFEFWDFVGGRYSLWSAIGLSIMIYLGKKNFNALLKGAYLMDEHFRNAPFESNLPVLMGLIGVWYINFFQSKSHLIAPYDQYLRHFPKFIQQLDMESNGKRISKKGETIPYDTCPVVWGDMGINAQHAFFQLLHQGTHLIPIDFIASLDKKPNAKGHHEILFSNVLAQAQAFMKGKSYEEALGELLFKGLDKDEAKDLAHHRVFFGNRPSNILLLEKISPSNIGALVALYEHKVFVQGVIWDINSFDQWGVELGKELAVPILQELEGHKSNAYFDSSTKHLIELYKNYNQ.

The active-site Proton donor is the glutamate 351. Active-site residues include histidine 382 and lysine 510.

The protein belongs to the GPI family.

It localises to the cytoplasm. It catalyses the reaction alpha-D-glucose 6-phosphate = beta-D-fructose 6-phosphate. It participates in carbohydrate biosynthesis; gluconeogenesis. Its pathway is carbohydrate degradation; glycolysis; D-glyceraldehyde 3-phosphate and glycerone phosphate from D-glucose: step 2/4. Catalyzes the reversible isomerization of glucose-6-phosphate to fructose-6-phosphate. This chain is Glucose-6-phosphate isomerase, found in Helicobacter pylori (strain P12).